The primary structure comprises 556 residues: Protein trichome birefringence-like 1 (556 aa).

Residues 38 to 58 (TFVYAFVVTFVALTVFLAFSP) traverse the membrane as a helical; Signal-anchor for type II membrane protein segment. A GDS motif motif is present at residues 269–271 (GDS). The DCXHWCLPGXXDXWN motif motif lies at 514–528 (DCSHWCLPGVPDSWN).

The protein belongs to the PC-esterase family. TBL subfamily. Not expressed in trichomes.

It localises to the membrane. Its function is as follows. Can complement TBR and is therefore functionally equivalent, but may work in different tissue. May act as a bridging protein that binds pectin and other cell wall polysaccharides. Probably involved in maintaining esterification of pectins. May be involved in the specific O-acetylation of cell wall polymers. This Arabidopsis thaliana (Mouse-ear cress) protein is Protein trichome birefringence-like 1 (TBL1).